We begin with the raw amino-acid sequence, 348 residues long: Dihydroorotase (348 aa).

His-14 and His-16 together coordinate Zn(2+). Residues 16–18 and Asn-42 contribute to the substrate site; that span reads HLR. 3 residues coordinate Zn(2+): Lys-100, His-137, and His-175. Lys-100 is subject to N6-carboxylysine. Position 137 (His-137) interacts with substrate. Leu-220 lines the substrate pocket. Asp-248 serves as a coordination point for Zn(2+). Asp-248 is a catalytic residue. Substrate-binding residues include His-252 and Ala-264.

The protein belongs to the metallo-dependent hydrolases superfamily. DHOase family. Class II DHOase subfamily. In terms of assembly, homodimer. Requires Zn(2+) as cofactor.

It carries out the reaction (S)-dihydroorotate + H2O = N-carbamoyl-L-aspartate + H(+). It participates in pyrimidine metabolism; UMP biosynthesis via de novo pathway; (S)-dihydroorotate from bicarbonate: step 3/3. Catalyzes the reversible cyclization of carbamoyl aspartate to dihydroorotate. This Pseudomonas aeruginosa (strain ATCC 15692 / DSM 22644 / CIP 104116 / JCM 14847 / LMG 12228 / 1C / PRS 101 / PAO1) protein is Dihydroorotase.